A 247-amino-acid chain; its full sequence is 3-oxoacyl-[acyl-carrier-protein] reductase MabA (247 aa).

Residues 25-27 (RGI), Arg47, 61-62 (DV), Gly90, Tyr153, Lys157, Ile186, and Arg197 contribute to the NADP(+) site. Tyr153 functions as the Proton acceptor in the catalytic mechanism.

This sequence belongs to the short-chain dehydrogenases/reductases (SDR) family. In terms of assembly, homotetramer.

The protein resides in the secreted. It is found in the cell wall. It catalyses the reaction a (3R)-hydroxyacyl-[ACP] + NADP(+) = a 3-oxoacyl-[ACP] + NADPH + H(+). It functions in the pathway lipid metabolism; mycolic acid biosynthesis. Functionally, part of the mycobacterial fatty acid elongation system FAS-II, which is involved in mycolic acid biosynthesis. Catalyzes the NADPH-dependent reduction of beta-ketoacyl derivatives, the second step of the FAS-II elongation cycle. The protein is 3-oxoacyl-[acyl-carrier-protein] reductase MabA of Mycobacterium bovis (strain ATCC BAA-935 / AF2122/97).